A 546-amino-acid polypeptide reads, in one-letter code: 2-isopropylmalate synthase (546 aa).

Positions 8-271 (ILIFDTTLRD…NSFFGRSSDS (264 aa)) constitute a Pyruvate carboxyltransferase domain. Mn(2+) is bound by residues Asp17, His208, His210, and Asn244. The regulatory domain stretch occupies residues 408-546 (QLSHVQVSCG…KNKVLSNPKK (139 aa)).

This sequence belongs to the alpha-IPM synthase/homocitrate synthase family. LeuA type 1 subfamily. Homodimer. Mn(2+) serves as cofactor.

It is found in the cytoplasm. It carries out the reaction 3-methyl-2-oxobutanoate + acetyl-CoA + H2O = (2S)-2-isopropylmalate + CoA + H(+). It participates in amino-acid biosynthesis; L-leucine biosynthesis; L-leucine from 3-methyl-2-oxobutanoate: step 1/4. Catalyzes the condensation of the acetyl group of acetyl-CoA with 3-methyl-2-oxobutanoate (2-ketoisovalerate) to form 3-carboxy-3-hydroxy-4-methylpentanoate (2-isopropylmalate). The protein is 2-isopropylmalate synthase of Prochlorococcus marinus subsp. pastoris (strain CCMP1986 / NIES-2087 / MED4).